Consider the following 99-residue polypeptide: Nucleoid-associated protein EbfC (99 aa).

It belongs to the YbaB/EbfC family. Homodimer.

It is found in the cytoplasm. Its subcellular location is the nucleoid. Binds to DNA and alters its conformation. May be involved in regulation of gene expression, nucleoid organization and DNA protection. The chain is Nucleoid-associated protein EbfC from Borrelia turicatae (strain 91E135).